We begin with the raw amino-acid sequence, 396 residues long: Elongation factor Tu (396 aa).

The tr-type G domain occupies 11-205 (KPHVNIGTIG…VVDEYIPTPK (195 aa)). A G1 region spans residues 20-27 (GHVDHGKT). 20–27 (GHVDHGKT) is a GTP binding site. A Mg(2+)-binding site is contributed by threonine 27. The segment at 61-65 (GITIN) is G2. Residues 82–85 (DAPG) form a G3 region. GTP contacts are provided by residues 82–86 (DAPGH) and 137–140 (NKTD). The tract at residues 137 to 140 (NKTD) is G4. Residues 175–177 (SAL) are G5.

This sequence belongs to the TRAFAC class translation factor GTPase superfamily. Classic translation factor GTPase family. EF-Tu/EF-1A subfamily. Monomer.

The protein resides in the cytoplasm. It catalyses the reaction GTP + H2O = GDP + phosphate + H(+). Its function is as follows. GTP hydrolase that promotes the GTP-dependent binding of aminoacyl-tRNA to the A-site of ribosomes during protein biosynthesis. The chain is Elongation factor Tu from Limosilactobacillus fermentum (strain NBRC 3956 / LMG 18251) (Lactobacillus fermentum).